We begin with the raw amino-acid sequence, 187 residues long: Nucleoside-triphosphatase THEP1 (187 aa).

Residues 9-16 (GRPGVGKT) and 100-107 (LIAIDEIG) contribute to the ATP site.

This sequence belongs to the THEP1 NTPase family.

The enzyme catalyses a ribonucleoside 5'-triphosphate + H2O = a ribonucleoside 5'-diphosphate + phosphate + H(+). Its function is as follows. Has nucleotide phosphatase activity towards ATP, GTP, CTP, TTP and UTP. May hydrolyze nucleoside diphosphates with lower efficiency. This Hyperthermus butylicus (strain DSM 5456 / JCM 9403 / PLM1-5) protein is Nucleoside-triphosphatase THEP1.